The sequence spans 586 residues: Dual specificity tyrosine-phosphorylation-regulated kinase 3 (586 aa).

The segment covering 1–13 (MGGAARDRGRKDA) has biased composition (basic and acidic residues). The tract at residues 1–187 (MGGAARDRGR…QGVIGGPNNG (187 aa)) is disordered. The Protein kinase domain maps to 208-521 (YEVLKIIGKG…PAQALRHPWI (314 aa)). Residues 214–222 (IGKGSFGQV), Lys-237, and 287–290 (FELL) each bind ATP. Asp-334 (proton acceptor) is an active-site residue. Tyr-368 bears the Phosphotyrosine mark. Positions 467–480 (RSRRGKKRGPPGSK) match the Nuclear localization signal motif.

This sequence belongs to the protein kinase superfamily. CMGC Ser/Thr protein kinase family. MNB/DYRK subfamily. Interacts with SIRT1. Mg(2+) serves as cofactor. Post-translationally, ubiquitinated at anaphase by the anaphase-promoting complex (APC/C), leading to its degradation by the proteasome. Protein kinase activity is activated following autophosphorylation at Tyr-368.

It localises to the nucleus. The protein resides in the cytoplasm. The protein localises to the nucleus speckle. It is found in the cytoplasmic granule. Its subcellular location is the cytoskeleton. It localises to the microtubule organizing center. The protein resides in the centrosome. The enzyme catalyses L-seryl-[protein] + ATP = O-phospho-L-seryl-[protein] + ADP + H(+). It carries out the reaction L-threonyl-[protein] + ATP = O-phospho-L-threonyl-[protein] + ADP + H(+). The catalysed reaction is L-tyrosyl-[protein] + ATP = O-phospho-L-tyrosyl-[protein] + ADP + H(+). Its activity is regulated as follows. Protein kinase activity is activated following autophosphorylation at Tyr-368. Dual-specificity protein kinase that promotes disassembly of several types of membraneless organelles during mitosis, such as stress granules, nuclear speckles and pericentriolar material. Dual-specificity tyrosine-regulated kinases (DYRKs) autophosphorylate a critical tyrosine residue in their activation loop and phosphorylate their substrate on serine and threonine residues. Acts as a central dissolvase of membraneless organelles during the G2-to-M transition, after the nuclear-envelope breakdown: acts by mediating phosphorylation of multiple serine and threonine residues in unstructured domains of proteins, such as SRRM1 and PCM1. Does not mediate disassembly of all membraneless organelles: disassembly of P-body and nucleolus is not regulated by DYRK3. Dissolution of membraneless organelles at the onset of mitosis is also required to release mitotic regulators, such as ZNF207, from liquid-unmixed organelles where they are sequestered and keep them dissolved during mitosis. Regulates mTORC1 by mediating the dissolution of stress granules: during stressful conditions, DYRK3 partitions from the cytosol to the stress granule, together with mTORC1 components, which prevents mTORC1 signaling. When stress signals are gone, the kinase activity of DYRK3 is required for the dissolution of stress granule and mTORC1 relocation to the cytosol: acts by mediating the phosphorylation of the mTORC1 inhibitor AKT1S1, allowing full reactivation of mTORC1 signaling. Also acts as a negative regulator of EPO-dependent erythropoiesis: may place an upper limit on red cell production during stress erythropoiesis. Inhibits cell death due to cytokine withdrawal in hematopoietic progenitor cells. Promotes cell survival upon genotoxic stress through phosphorylation of SIRT1: this in turn inhibits p53/TP53 activity and apoptosis. The sequence is that of Dual specificity tyrosine-phosphorylation-regulated kinase 3 from Mus musculus (Mouse).